Consider the following 274-residue polypeptide: uncharacterized protein (274 aa).

This is an uncharacterized protein from Bacillus subtilis (strain 168).